We begin with the raw amino-acid sequence, 149 residues long: Transcription antitermination protein NusB (149 aa).

Belongs to the NusB family.

Functionally, involved in transcription antitermination. Required for transcription of ribosomal RNA (rRNA) genes. Binds specifically to the boxA antiterminator sequence of the ribosomal RNA (rrn) operons. The protein is Transcription antitermination protein NusB of Acinetobacter baumannii (strain SDF).